Here is a 354-residue protein sequence, read N- to C-terminus: DNA polymerase IV (354 aa).

Residues 6–187 enclose the UmuC domain; that stretch reads IIHIDCDCFY…LPVARLHGVG (182 aa). Asp10 and Asp105 together coordinate Mg(2+). Glu106 is an active-site residue.

It belongs to the DNA polymerase type-Y family. In terms of assembly, monomer. The cofactor is Mg(2+).

It is found in the cytoplasm. The enzyme catalyses DNA(n) + a 2'-deoxyribonucleoside 5'-triphosphate = DNA(n+1) + diphosphate. Poorly processive, error-prone DNA polymerase involved in untargeted mutagenesis. Copies undamaged DNA at stalled replication forks, which arise in vivo from mismatched or misaligned primer ends. These misaligned primers can be extended by PolIV. Exhibits no 3'-5' exonuclease (proofreading) activity. May be involved in translesional synthesis, in conjunction with the beta clamp from PolIII. This Pseudomonas entomophila (strain L48) protein is DNA polymerase IV.